Here is a 624-residue protein sequence, read N- to C-terminus: tRNA uridine 5-carboxymethylaminomethyl modification enzyme MnmG (624 aa).

FAD is bound by residues 13–18 (GGGHAG), V125, and S180. Residue 273–287 (GPRYCPSIEDKIVRF) participates in NAD(+) binding. Q370 contacts FAD.

The protein belongs to the MnmG family. As to quaternary structure, homodimer. Heterotetramer of two MnmE and two MnmG subunits. Requires FAD as cofactor.

Its subcellular location is the cytoplasm. NAD-binding protein involved in the addition of a carboxymethylaminomethyl (cmnm) group at the wobble position (U34) of certain tRNAs, forming tRNA-cmnm(5)s(2)U34. This Legionella pneumophila (strain Corby) protein is tRNA uridine 5-carboxymethylaminomethyl modification enzyme MnmG.